A 363-amino-acid polypeptide reads, in one-letter code: Chorismate synthase (363 aa).

Arg48 contributes to the NADP(+) binding site. FMN contacts are provided by residues 125 to 127 (RSS), 238 to 239 (NA), Gly278, 293 to 297 (KPTAS), and Arg319.

Belongs to the chorismate synthase family. In terms of assembly, homotetramer. FMNH2 is required as a cofactor.

It carries out the reaction 5-O-(1-carboxyvinyl)-3-phosphoshikimate = chorismate + phosphate. It functions in the pathway metabolic intermediate biosynthesis; chorismate biosynthesis; chorismate from D-erythrose 4-phosphate and phosphoenolpyruvate: step 7/7. Catalyzes the anti-1,4-elimination of the C-3 phosphate and the C-6 proR hydrogen from 5-enolpyruvylshikimate-3-phosphate (EPSP) to yield chorismate, which is the branch point compound that serves as the starting substrate for the three terminal pathways of aromatic amino acid biosynthesis. This reaction introduces a second double bond into the aromatic ring system. This Acinetobacter baylyi (strain ATCC 33305 / BD413 / ADP1) protein is Chorismate synthase.